Here is an 83-residue protein sequence, read N- to C-terminus: UPF0512 protein W (83 aa).

This sequence belongs to the UPF0512 family.

This is UPF0512 protein W from Dictyostelium discoideum (Social amoeba).